The primary structure comprises 314 residues: BCL2/adenovirus E1B 19 kDa protein-interacting protein 2 (314 aa).

The disordered stretch occupies residues 1–21; that stretch reads MEGVELKEEWQDEDFPIPLPE. The span at 10–21 shows a compositional bias: acidic residues; it reads WQDEDFPIPLPE. Phosphoserine is present on residues Ser-41 and Ser-77. The tract at residues 76-100 is disordered; it reads ESGEIDLDGLDTPSENSNEFEWEDD. Thr-87 is modified (phosphothreonine). Residues Ser-89, Ser-92, and Ser-114 each carry the phosphoserine modification. The 158-residue stretch at 147-304 folds into the CRAL-TRIO domain; the sequence is IEPYKKVISH…CIKQVDQELN (158 aa).

It is found in the cytoplasm. Its subcellular location is the perinuclear region. Implicated in the suppression of cell death. Interacts with the BCL-2 and adenovirus E1B 19 kDa proteins. This Homo sapiens (Human) protein is BCL2/adenovirus E1B 19 kDa protein-interacting protein 2 (BNIP2).